The sequence spans 108 residues: Phosphoribosyl-ATP pyrophosphatase (108 aa).

Belongs to the PRA-PH family.

It localises to the cytoplasm. It carries out the reaction 1-(5-phospho-beta-D-ribosyl)-ATP + H2O = 1-(5-phospho-beta-D-ribosyl)-5'-AMP + diphosphate + H(+). It functions in the pathway amino-acid biosynthesis; L-histidine biosynthesis; L-histidine from 5-phospho-alpha-D-ribose 1-diphosphate: step 2/9. This chain is Phosphoribosyl-ATP pyrophosphatase, found in Dechloromonas aromatica (strain RCB).